Consider the following 344-residue polypeptide: Anthranilate phosphoribosyltransferase (344 aa).

5-phospho-alpha-D-ribose 1-diphosphate-binding positions include glycine 80, 83–84 (GD), threonine 88, 90–93 (NVST), 108–116 (KHGNRSVSS), and serine 120. Residue glycine 80 participates in anthranilate binding. Serine 92 is a binding site for Mg(2+). Asparagine 111 is an anthranilate binding site. Arginine 166 provides a ligand contact to anthranilate. Residues aspartate 225 and glutamate 226 each coordinate Mg(2+).

This sequence belongs to the anthranilate phosphoribosyltransferase family. Homodimer. It depends on Mg(2+) as a cofactor.

It catalyses the reaction N-(5-phospho-beta-D-ribosyl)anthranilate + diphosphate = 5-phospho-alpha-D-ribose 1-diphosphate + anthranilate. The protein operates within amino-acid biosynthesis; L-tryptophan biosynthesis; L-tryptophan from chorismate: step 2/5. Its function is as follows. Catalyzes the transfer of the phosphoribosyl group of 5-phosphorylribose-1-pyrophosphate (PRPP) to anthranilate to yield N-(5'-phosphoribosyl)-anthranilate (PRA). The protein is Anthranilate phosphoribosyltransferase of Legionella pneumophila (strain Paris).